The chain runs to 110 residues: MEVAAKYKGARLSAQKARLVADQVRGKAVEDALNILTFSPKKAAVVIKKALESAIANAEHNEGLDVDDLRVSTVMVDEGPTLKRIKARAKGRADRIFKRTCHITVKVADK.

The protein belongs to the universal ribosomal protein uL22 family. Part of the 50S ribosomal subunit.

This protein binds specifically to 23S rRNA; its binding is stimulated by other ribosomal proteins, e.g. L4, L17, and L20. It is important during the early stages of 50S assembly. It makes multiple contacts with different domains of the 23S rRNA in the assembled 50S subunit and ribosome. In terms of biological role, the globular domain of the protein is located near the polypeptide exit tunnel on the outside of the subunit, while an extended beta-hairpin is found that lines the wall of the exit tunnel in the center of the 70S ribosome. In Marinobacter nauticus (strain ATCC 700491 / DSM 11845 / VT8) (Marinobacter aquaeolei), this protein is Large ribosomal subunit protein uL22.